Consider the following 115-residue polypeptide: NADH-ubiquinone oxidoreductase chain 3 (115 aa).

3 helical membrane passes run 3–23 (LMLALLTNFTLATLLVIIAFW), 55–75 (FFLVAITFLLFDLEIALLLPL), and 84–104 (LNTMLTMALFLIILLAVSLAY).

Belongs to the complex I subunit 3 family. Core subunit of respiratory chain NADH dehydrogenase (Complex I) which is composed of 45 different subunits. Interacts with TMEM186. Interacts with TMEM242.

It is found in the mitochondrion inner membrane. It carries out the reaction a ubiquinone + NADH + 5 H(+)(in) = a ubiquinol + NAD(+) + 4 H(+)(out). Core subunit of the mitochondrial membrane respiratory chain NADH dehydrogenase (Complex I) which catalyzes electron transfer from NADH through the respiratory chain, using ubiquinone as an electron acceptor. Essential for the catalytic activity of complex I. The protein is NADH-ubiquinone oxidoreductase chain 3 of Bos indicus (Zebu).